The primary structure comprises 167 residues: Small ribosomal subunit protein uS5 (167 aa).

Residues 19-82 (LTEKVLHINR…EAARKNMISC (64 aa)) enclose the S5 DRBM domain.

This sequence belongs to the universal ribosomal protein uS5 family. Part of the 30S ribosomal subunit. Contacts proteins S4 and S8.

In terms of biological role, with S4 and S12 plays an important role in translational accuracy. Its function is as follows. Located at the back of the 30S subunit body where it stabilizes the conformation of the head with respect to the body. This Protochlamydia amoebophila (strain UWE25) protein is Small ribosomal subunit protein uS5.